The primary structure comprises 494 residues: MSTTLLSAFYDVDFLCKTEKSLANLNLNNMLDKKAVGTPVAAAPSSGFAPGFLRRHSASNLHALAHPAPSPGSCSPKFPGAANGSSCGSAAAGGPTSYGTLKEPSGGGGTALLNKENKFRDRSFSENGDRSQHLLHLQQQQKGGGGSQINSTRYKTELCRPFEESGTCKYGEKCQFAHGFHELRSLTRHPKYKTELCRTFHTIGFCPYGPRCHFIHNADERRPAPSGGASGDLRAFGTRDALHLGFPREPRPKLHHSLSFSGFPSGHHQPPGGLESPLLLDSPTSRTPPPPSCSSASSCSSSASSCSSASAASTPSGAPTCCASAAAAAAAALLYGTGGAEDLLAPGAPCAACSSASCANNAFAFGPELSSLITPLAIQTHNFAAVAAAAYYRSQQQQQQQGLAPPAQPPAPPSATLPAGAAAPPSPPFSFQLPRRLSDSPVFDAPPSPPDSLSDRDSYLSGSLSSGSLSGSESPSLDPGRRLPIFSRLSISDD.

Position 57 is a phosphoserine (S57). Positions 93-113 are disordered; that stretch reads GGPTSYGTLKEPSGGGGTALL. Residue S125 is modified to Phosphoserine. The short motif at 153–158 is the RNA-binding element; the sequence is RYKTEL. 2 consecutive C3H1-type zinc fingers follow at residues 153-181 and 191-219; these read RYKTELCRPFEESGTCKYGEKCQFAHGFH and KYKTELCRTFHTIGFCPYGPRCHFIHNAD. Residues 170–211 are RNA-binding; sequence YGEKCQFAHGFHELRSLTRHPKYKTELCRTFHTIGFCPYGPR. Position 238 is a phosphothreonine (T238). Disordered stretches follow at residues 257–293 and 397–494; these read SLSFSGFPSGHHQPPGGLESPLLLDSPTSRTPPPPSC and QQQQ…ISDD. Residues 406–415 are compositionally biased toward pro residues; sequence PAQPPAPPSA. Low complexity-rich tracts occupy residues 416-435 and 459-478; these read TLPAGAAAPPSPPFSFQLPR and YLSGSLSSGSLSGSESPSLD. Residues S490 and S492 each carry the phosphoserine; by RPS6KA1 modification.

As to quaternary structure, associates with the cytoplasmic CCR4-NOT deadenylase to trigger ARE-containing mRNA deadenylation and decay processes. Interacts with CNOT7; this interaction is inhibited in response to phorbol 12-myristate 13-acetate (PMA) treatment in a p38 MAPK-dependent manner. Interacts with CNOT6L. Post-translationally, phosphorylated by RPS6KA1 at Ser-490 and Ser-492 upon phorbol 12-myristate 13-acetate (PMA) treatment; this phosphorylation results in dissociation of the CCR4-NOT-deadenylase complex and induces p38 MAPK-mediated stabilization of the low-density lipoprotein (LDL) receptor (LDLR) mRNA. Phosphorylation occurs during early preadipocyte differentiation. Expressed mainly in the basal epidermal layer, weakly in the suprabasal epidermal layers. Expressed in epidermal keratinocytes (at protein level). Expressed in oocytes.

It localises to the nucleus. It is found in the cytoplasm. Its function is as follows. Zinc-finger RNA-binding protein that destabilizes several cytoplasmic AU-rich element (ARE)-containing mRNA transcripts by promoting their poly(A) tail removal or deadenylation, and hence provide a mechanism for attenuating protein synthesis. Acts as a 3'-untranslated region (UTR) ARE mRNA-binding adapter protein to communicate signaling events to the mRNA decay machinery. Functions by recruiting the CCR4-NOT deadenylase complex and probably other components of the cytoplasmic RNA decay machinery to the bound ARE-containing mRNAs, and hence promotes ARE-mediated mRNA deadenylation and decay processes. Binds to 3'-UTR ARE of numerous mRNAs. Promotes ARE-containing mRNA decay of the low-density lipoprotein (LDL) receptor (LDLR) mRNA in response to phorbol 12-myristate 13-acetate (PMA) treatment in a p38 MAPK-dependent manner. Positively regulates early adipogenesis by promoting ARE-mediated mRNA decay of immediate early genes (IEGs). Plays a role in mature peripheral neuron integrity by promoting ARE-containing mRNA decay of the transcriptional repressor REST mRNA. Plays a role in ovulation and oocyte meiotic maturation by promoting ARE-mediated mRNA decay of the luteinizing hormone receptor LHCGR mRNA. Acts as a negative regulator of erythroid cell differentiation: promotes glucocorticoid-induced self-renewal of erythroid cells by binding mRNAs that are induced or highly expressed during terminal erythroid differentiation and promotes their degradation, preventing erythroid cell differentiation. In association with ZFP36L1 maintains quiescence on developing B lymphocytes by promoting ARE-mediated decay of several mRNAs encoding cell cycle regulators that help B cells progress through the cell cycle, and hence ensuring accurate variable-diversity-joining (VDJ) recombination process and functional immune cell formation. Together with ZFP36L1 is also necessary for thymocyte development and prevention of T-cell acute lymphoblastic leukemia (T-ALL) transformation by promoting ARE-mediated mRNA decay of the oncogenic transcription factor NOTCH1 mRNA. This is mRNA decay activator protein ZFP36L2 from Homo sapiens (Human).